Here is a 559-residue protein sequence, read N- to C-terminus: Sesquiterpene synthase (559 aa).

Mg(2+)-binding residues include aspartate 312, aspartate 316, and glutamate 464. The DDXXD motif motif lies at 312-316; the sequence is DDIYD.

The protein belongs to the terpene synthase family. Tpsa subfamily. It depends on Mg(2+) as a cofactor. Mn(2+) serves as cofactor.

In terms of biological role, catalyzes alpha-humulene and delta-cadinene, as well as beta-elemene, the thermal rearrangement product of germacrene A and several other bicyclic sesquiterpenes when incubated with (2E,6E)-farnesyl diphosphate. In Santalum austrocaledonicum (Sandalwood), this protein is Sesquiterpene synthase.